The following is a 317-amino-acid chain: Regulator of microtubule dynamics protein 1 (317 aa).

Lys168 bears the N6-succinyllysine mark. 2 TPR repeats span residues 171 to 207 and 225 to 261; these read AICI…NPKD and PWYQ…DPNF.

It belongs to the RMDN family. In terms of assembly, interacts with microtubules.

Its subcellular location is the cytoplasm. It is found in the cytoskeleton. The protein resides in the spindle. It localises to the spindle pole. The protein is Regulator of microtubule dynamics protein 1 (RMDN1) of Bos taurus (Bovine).